Here is a 232-residue protein sequence, read N- to C-terminus: uncharacterized protein (232 aa).

This is an uncharacterized protein from Homo sapiens (Human).